An 84-amino-acid polypeptide reads, in one-letter code: Putative UPF0320 protein YNL337W (84 aa).

It belongs to the UPF0320 family.

The chain is Putative UPF0320 protein YNL337W from Saccharomyces cerevisiae (strain ATCC 204508 / S288c) (Baker's yeast).